A 121-amino-acid chain; its full sequence is Protein MGF 110-5L (121 aa).

An N-terminal signal peptide occupies residues 1 to 18; that stretch reads MLVIFLGILGLLANQVSS. N-linked (GlcNAc...) asparagine; by host glycosylation is found at Asn62 and Asn116.

This sequence belongs to the asfivirus MGF 110 family.

Its function is as follows. Plays a role in virus cell tropism, and may be required for efficient virus replication in macrophages. In African swine fever virus (isolate Tick/South Africa/Pretoriuskop Pr4/1996) (ASFV), this protein is Protein MGF 110-5L.